Consider the following 421-residue polypeptide: Vasopressin V1b receptor (421 aa).

Over 1 to 35 (MDSEPSWTATPSPGGTLFVPNTTTPWLGRDEELAK) the chain is Extracellular. Residue Asn21 is glycosylated (N-linked (GlcNAc...) asparagine). The helical transmembrane segment at 36 to 59 (VEIGILATVLVLATGGNLAVLLIL) threads the bilayer. Over 60–71 (GLQGHKRSRMHL) the chain is Cytoplasmic. Residues 72-93 (FVLHLALTDLGVALFQVLPQLL) form a helical membrane-spanning segment. The Extracellular segment spans residues 94-108 (WDITYRFQGSDLLCR). Cys107 and Cys186 form a disulfide bridge. A helical transmembrane segment spans residues 109–130 (AVKYLQVLSMFASTYMLLAMTL). The Cytoplasmic segment spans residues 131–151 (DRYLAVCHPLRSLQQPSQSTY). A helical membrane pass occupies residues 152-173 (PLIAAPWLLAAILSLPQVFIFS). Topologically, residues 174–202 (LREVIQGSGVLDCWADFYFSWGPRAYITW) are extracellular. A helical transmembrane segment spans residues 203–223 (TTMAIFVLPVVVLTACYGLIC). At 224–280 (HEIYKNLKVKTQAGREERRGWPKSSSSAAAAATRGLPSRVSSISTISRAKIRTVKMT) the chain is on the cytoplasmic side. A helical transmembrane segment spans residues 281–300 (FVIVLAYIACWAPFFSVQMW). At 301-318 (SVWDENAPNEDSTNVAFT) the chain is on the extracellular side. A helical membrane pass occupies residues 319-338 (ISMLLGNLSSCCNPWIYMGF). Residues 339 to 421 (NSHLLPRSLS…GEATMETSIS (83 aa)) are Cytoplasmic-facing. The segment at 399–421 (KPAGSLKDLEQVDGEATMETSIS) is disordered.

The protein belongs to the G-protein coupled receptor 1 family. Vasopressin/oxytocin receptor subfamily.

The protein localises to the cell membrane. Receptor for arginine vasopressin. The activity of this receptor is mediated by G proteins which activate a phosphatidyl-inositol-calcium second messenger system. The protein is Vasopressin V1b receptor (Avpr1b) of Mus musculus (Mouse).